We begin with the raw amino-acid sequence, 105 residues long: Met repressor (105 aa).

Belongs to the MetJ family. In terms of assembly, homodimer.

It is found in the cytoplasm. Functionally, this regulatory protein, when combined with SAM (S-adenosylmethionine) represses the expression of the methionine regulon and of enzymes involved in SAM synthesis. This is Met repressor from Actinobacillus pleuropneumoniae serotype 7 (strain AP76).